We begin with the raw amino-acid sequence, 137 residues long: ATP synthase epsilon chain (137 aa).

Belongs to the ATPase epsilon chain family. As to quaternary structure, F-type ATPases have 2 components, CF(1) - the catalytic core - and CF(0) - the membrane proton channel. CF(1) has five subunits: alpha(3), beta(3), gamma(1), delta(1), epsilon(1). CF(0) has three main subunits: a, b and c.

It localises to the cell membrane. Produces ATP from ADP in the presence of a proton gradient across the membrane. The sequence is that of ATP synthase epsilon chain from Thermobifida fusca (strain YX).